Here is a 253-residue protein sequence, read N- to C-terminus: Sulfur carrier protein FdhD (253 aa).

Cys100 acts as the Cysteine persulfide intermediate in catalysis.

Belongs to the FdhD family.

It is found in the cytoplasm. Functionally, required for formate dehydrogenase (FDH) activity. Acts as a sulfur carrier protein that transfers sulfur from IscS to the molybdenum cofactor prior to its insertion into FDH. In Sulfolobus acidocaldarius (strain ATCC 33909 / DSM 639 / JCM 8929 / NBRC 15157 / NCIMB 11770), this protein is Sulfur carrier protein FdhD.